A 418-amino-acid polypeptide reads, in one-letter code: Methionine aminopeptidase 2 (418 aa).

The segment at 18–49 is disordered; sequence VSEPAAVDDSEVTEDATVQDKKKKKKKKKKKG. Basic residues predominate over residues 38–49; that stretch reads KKKKKKKKKKKG. Residue His172 participates in substrate binding. The a divalent metal cation site is built by Asp192, Asp203, and His272. Residue His280 coordinates substrate. The a divalent metal cation site is built by Glu305 and Glu399.

The protein belongs to the peptidase M24A family. Methionine aminopeptidase eukaryotic type 2 subfamily. It depends on Co(2+) as a cofactor. Zn(2+) is required as a cofactor. The cofactor is Mn(2+). Fe(2+) serves as cofactor.

It is found in the cytoplasm. It carries out the reaction Release of N-terminal amino acids, preferentially methionine, from peptides and arylamides.. Cotranslationally removes the N-terminal methionine from nascent proteins. The N-terminal methionine is often cleaved when the second residue in the primary sequence is small and uncharged (Met-Ala-, Cys, Gly, Pro, Ser, Thr, or Val). This Kluyveromyces lactis (strain ATCC 8585 / CBS 2359 / DSM 70799 / NBRC 1267 / NRRL Y-1140 / WM37) (Yeast) protein is Methionine aminopeptidase 2.